Consider the following 229-residue polypeptide: Potassium/proton antiporter CemA (229 aa).

3 consecutive transmembrane segments (helical) span residues 7–27, 107–127, and 189–209; these read FTPLLYLASIIFLPWWISLSF, ILHFSTNIICFIILSGYSLLG, and IISGLVSTFPVILDTIFKYWI.

It belongs to the CemA family.

It is found in the plastid. It localises to the chloroplast inner membrane. It carries out the reaction K(+)(in) + H(+)(out) = K(+)(out) + H(+)(in). In terms of biological role, contributes to K(+)/H(+) antiport activity by supporting proton efflux to control proton extrusion and homeostasis in chloroplasts in a light-dependent manner to modulate photosynthesis. Prevents excessive induction of non-photochemical quenching (NPQ) under continuous-light conditions. Indirectly promotes efficient inorganic carbon uptake into chloroplasts. In Lactuca sativa (Garden lettuce), this protein is Potassium/proton antiporter CemA.